A 536-amino-acid polypeptide reads, in one-letter code: Phosphoenolpyruvate carboxykinase (ATP) (536 aa).

Substrate is bound by residues Arg61, Tyr195, and Lys201. Residues Lys201, His220, and 236–244 (GLSGTGKTT) each bind ATP. 2 residues coordinate Mn(2+): Lys201 and His220. Asp257 contributes to the Mn(2+) binding site. ATP is bound by residues Glu285, Arg322, and Thr447. Position 322 (Arg322) interacts with substrate.

Belongs to the phosphoenolpyruvate carboxykinase (ATP) family. Mn(2+) serves as cofactor.

Its subcellular location is the cytoplasm. It carries out the reaction oxaloacetate + ATP = phosphoenolpyruvate + ADP + CO2. Its pathway is carbohydrate biosynthesis; gluconeogenesis. In terms of biological role, involved in the gluconeogenesis. Catalyzes the conversion of oxaloacetate (OAA) to phosphoenolpyruvate (PEP) through direct phosphoryl transfer between the nucleoside triphosphate and OAA. The polypeptide is Phosphoenolpyruvate carboxykinase (ATP) (Rhizobium johnstonii (strain DSM 114642 / LMG 32736 / 3841) (Rhizobium leguminosarum bv. viciae)).